The following is a 302-amino-acid chain: Probable E3 ubiquitin-protein ligase RZFP34 (302 aa).

The CHY-type zinc finger occupies 54-130; that stretch reads EGIMQYGCAH…VRQVCISCGV (77 aa). Residues C61, H63, C74, C75, C81, C84, H85, H100, C112, C115, C125, C128, C137, C140, H153, C154, C157, C160, H170, C171, C174, C177, H186, and C188 each coordinate Zn(2+). A CTCHY-type zinc finger spans residues 132–196; the sequence is MGKYFCEVCK…ACVEGAMHHD (65 aa). The RING-type; atypical zinc finger occupies 197-240; that stretch reads CPICFEYLFESTNDVSVLPCGHTIHVKCLREMEEHCQFACPLCS.

It is found in the nucleus. It catalyses the reaction S-ubiquitinyl-[E2 ubiquitin-conjugating enzyme]-L-cysteine + [acceptor protein]-L-lysine = [E2 ubiquitin-conjugating enzyme]-L-cysteine + N(6)-ubiquitinyl-[acceptor protein]-L-lysine.. It participates in protein modification; protein ubiquitination. Functionally, possesses transactivation activity in yeast cells. Involved in the regulation of stomatal aperture. May modulate the expression of genes that control stomata opening during heat shock or drought stress. The chain is Probable E3 ubiquitin-protein ligase RZFP34 from Oryza sativa subsp. japonica (Rice).